A 445-amino-acid polypeptide reads, in one-letter code: GTPase Der (445 aa).

EngA-type G domains are found at residues 3 to 167 (PVIA…YAGQ) and 180 to 353 (IKIA…AAAM). Residues 9–16 (GRPNVGKS), 56–60 (DTGGF), 119–122 (NKAE), 186–193 (GRPNVGKS), 233–237 (DTAGL), and 298–301 (NKWD) contribute to the GTP site. Residues 354–438 (SKLPTPKLTR…PLRIEFRSSN (85 aa)) form the KH-like domain.

The protein belongs to the TRAFAC class TrmE-Era-EngA-EngB-Septin-like GTPase superfamily. EngA (Der) GTPase family. As to quaternary structure, associates with the 50S ribosomal subunit.

Its function is as follows. GTPase that plays an essential role in the late steps of ribosome biogenesis. This chain is GTPase Der, found in Burkholderia cenocepacia (strain ATCC BAA-245 / DSM 16553 / LMG 16656 / NCTC 13227 / J2315 / CF5610) (Burkholderia cepacia (strain J2315)).